The following is a 753-amino-acid chain: Neuroendocrine convertase 1 (753 aa).

The N-terminal stretch at 1 to 27 (MEQRGWTLQCTAFAFFCVWCALSSVKA) is a signal peptide. The propeptide occupies 28 to 110 (KRQFVNEWAA…QQYEKERSKR (83 aa)). Residues 129–450 (QWYLQDTRMT…FGLLNAKALV (322 aa)) enclose the Peptidase S8 domain. Catalysis depends on charge relay system residues aspartate 167 and histidine 208. 2 disulfides stabilise this stretch: cysteine 225-cysteine 374 and cysteine 317-cysteine 347. The active-site Charge relay system is serine 382. Asparagine 401 is a glycosylation site (N-linked (GlcNAc...) asparagine). Residues 460 to 597 (NVPEKKECVV…KLILHGTSSQ (138 aa)) enclose the P/Homo B domain. Cysteine 467 and cysteine 494 are disulfide-bonded. The span at 633-651 (QKSLNGNLLVPKNSSSSNV) shows a compositional bias: polar residues. The interval 633–663 (QKSLNGNLLVPKNSSSSNVEGRRDEQVQGTP) is disordered. N-linked (GlcNAc...) asparagine glycosylation is present at asparagine 645.

This sequence belongs to the peptidase S8 family. Furin subfamily. Ca(2+) is required as a cofactor.

Its subcellular location is the cytoplasmic vesicle. The protein localises to the secretory vesicle. It carries out the reaction Release of protein hormones, neuropeptides and renin from their precursors, generally by hydrolysis of -Lys-Arg-|- bonds.. Its function is as follows. Involved in the processing of hormone and other protein precursors at sites comprised of pairs of basic amino acid residues. Substrates include POMC, renin, enkephalin, dynorphin, somatostatin, insulin and AGRP. In Mus cookii (Cook's mouse), this protein is Neuroendocrine convertase 1 (Pcsk1).